A 122-amino-acid chain; its full sequence is Large ribosomal subunit protein uL14 (122 aa).

It belongs to the universal ribosomal protein uL14 family. In terms of assembly, part of the 50S ribosomal subunit. Forms a cluster with proteins L3 and L19. In the 70S ribosome, L14 and L19 interact and together make contacts with the 16S rRNA in bridges B5 and B8.

Binds to 23S rRNA. Forms part of two intersubunit bridges in the 70S ribosome. The sequence is that of Large ribosomal subunit protein uL14 from Pelodictyon phaeoclathratiforme (strain DSM 5477 / BU-1).